The chain runs to 216 residues: Glycerol-3-phosphate acyltransferase (216 aa).

A run of 5 helical transmembrane segments spans residues 4–24 (TIIG…LWIG), 71–91 (LPFF…LAVI), 113–133 (VVLG…ASIL), 144–164 (VLSA…GFIL), and 165–185 (PSYD…IILR).

This sequence belongs to the PlsY family. As to quaternary structure, probably interacts with PlsX.

The protein resides in the cell membrane. It carries out the reaction an acyl phosphate + sn-glycerol 3-phosphate = a 1-acyl-sn-glycero-3-phosphate + phosphate. Its pathway is lipid metabolism; phospholipid metabolism. Functionally, catalyzes the transfer of an acyl group from acyl-phosphate (acyl-PO(4)) to glycerol-3-phosphate (G3P) to form lysophosphatidic acid (LPA). This enzyme utilizes acyl-phosphate as fatty acyl donor, but not acyl-CoA or acyl-ACP. This is Glycerol-3-phosphate acyltransferase from Streptococcus sanguinis (strain SK36).